The primary structure comprises 199 residues: MSRYTGSIWKVSRRLNYSLSETGKELIKRPYAPGMHGKKRIKAKDYGLQLQEKQKVRFTYGISEKQFKKIFKDAGKLKGIHGEMFLFLLESRLDNVVYRLGFAKTRQQARQLVNHGHILVDGKKVDIPSYSLRVGQIITLKEKSKDLIIVKEALANKLNRVDYISLNKELVGKYVRIPHRDELLPNIKEQLIVEFYNRK.

Residues 91 to 154 (SRLDNVVYRL…KDLIIVKEAL (64 aa)) enclose the S4 RNA-binding domain.

It belongs to the universal ribosomal protein uS4 family. As to quaternary structure, part of the 30S ribosomal subunit. Contacts protein S5. The interaction surface between S4 and S5 is involved in control of translational fidelity.

One of the primary rRNA binding proteins, it binds directly to 16S rRNA where it nucleates assembly of the body of the 30S subunit. Functionally, with S5 and S12 plays an important role in translational accuracy. In Phytoplasma mali (strain AT), this protein is Small ribosomal subunit protein uS4.